The primary structure comprises 423 residues: Ferrochelatase, mitochondrial (423 aa).

The transit peptide at 1-40 (MIRFCPSCFALKRTAPVLNHTSRLGNYFNNTFSKFSVNRM) directs the protein to the mitochondrion. C200 provides a ligand contact to [2Fe-2S] cluster. The active site involves D385. Residues C405, C408, and C413 each contribute to the [2Fe-2S] cluster site.

The protein belongs to the ferrochelatase family. As to quaternary structure, monomer. Requires [2Fe-2S] cluster as cofactor.

It localises to the mitochondrion inner membrane. Its subcellular location is the cytoplasm. It is found in the nucleus. It carries out the reaction heme b + 2 H(+) = protoporphyrin IX + Fe(2+). The protein operates within porphyrin-containing compound metabolism; protoheme biosynthesis; protoheme from protoporphyrin-IX: step 1/1. Its function is as follows. Catalyzes the ferrous insertion into protoporphyrin IX. The chain is Ferrochelatase, mitochondrial (hem15) from Schizosaccharomyces pombe (strain 972 / ATCC 24843) (Fission yeast).